The following is a 445-amino-acid chain: Putative ubiquitin carboxyl-terminal hydrolase L293 (445 aa).

Residues K133–I441 form the USP domain. The active-site Nucleophile is C142. The active-site Proton acceptor is H384.

It belongs to the peptidase C19 family.

Its subcellular location is the virion. It carries out the reaction Thiol-dependent hydrolysis of ester, thioester, amide, peptide and isopeptide bonds formed by the C-terminal Gly of ubiquitin (a 76-residue protein attached to proteins as an intracellular targeting signal).. This is Putative ubiquitin carboxyl-terminal hydrolase L293 from Acanthamoeba polyphaga mimivirus (APMV).